Consider the following 313-residue polypeptide: Ribosomal RNA small subunit methyltransferase H (313 aa).

S-adenosyl-L-methionine is bound by residues 34-36 (GGH), aspartate 53, phenylalanine 80, aspartate 101, and glutamine 108.

This sequence belongs to the methyltransferase superfamily. RsmH family.

The protein resides in the cytoplasm. It catalyses the reaction cytidine(1402) in 16S rRNA + S-adenosyl-L-methionine = N(4)-methylcytidine(1402) in 16S rRNA + S-adenosyl-L-homocysteine + H(+). Functionally, specifically methylates the N4 position of cytidine in position 1402 (C1402) of 16S rRNA. This Lacticaseibacillus paracasei (strain ATCC 334 / BCRC 17002 / CCUG 31169 / CIP 107868 / KCTC 3260 / NRRL B-441) (Lactobacillus paracasei) protein is Ribosomal RNA small subunit methyltransferase H.